The sequence spans 389 residues: Aspartic protease pepA (389 aa).

Positions 1–20 (MVLINQLGAVLAVCATLTVA) are cleaved as a signal peptide. The propeptide at 21 to 67 (APTKGKARFNVPQVAIPKKMVHHPAVSYARALHKFGMKVPKTVQDAA) is activation peptide. One can recognise a Peptidase A1 domain in the interval 82–386 (YVTQVTVGEG…DTQGPRIGFA (305 aa)). Residue Asp98 is part of the active site. N-linked (GlcNAc...) asparagine glycosylation occurs at Asn257. Asp279 is a catalytic residue. Cysteines 315 and 348 form a disulfide.

The protein belongs to the peptidase A1 family. Monomer.

It is found in the secreted. Secreted aspartic endopeptidase that allows assimilation of proteinaceous substrates. The scissile peptide bond is attacked by a nucleophilic water molecule activated by two aspartic residues in the active site. Shows a broad primary substrate specificity. Favors hydrophobic residues at the P1 and P1' positions. This Arthroderma otae (strain ATCC MYA-4605 / CBS 113480) (Microsporum canis) protein is Aspartic protease pepA.